Here is a 314-residue protein sequence, read N- to C-terminus: Secreted frizzled-related protein 1 (314 aa).

The signal sequence occupies residues Met1–Ala31. The FZ domain occupies Thr53–Met169. Disulfide bonds link Cys58–Cys121, Cys68–Cys114, Cys105–Cys140, Cys129–Cys166, and Cys133–Cys157. N-linked (GlcNAc...) asparagine glycosylation occurs at Asn173. Intrachain disulfides connect Cys186–Cys256, Cys189–Cys258, and Cys203–Cys306. The NTR domain occupies Cys186 to Cys306.

Belongs to the secreted frizzled-related protein (sFRP) family.

It localises to the secreted. In terms of biological role, soluble frizzled-related proteins (sFRPS) function as modulators of Wnt signaling through direct interaction with Wnts. They have a role in regulating cell growth and differentiation in specific cell types. The polypeptide is Secreted frizzled-related protein 1 (SFRP1) (Gallus gallus (Chicken)).